The chain runs to 430 residues: Dihydrolipoyllysine-residue acetyltransferase component of pyruvate dehydrogenase complex (430 aa).

The Lipoyl-binding domain maps to 2–77; sequence AFEFRLPDIG…VVGDVIVKID (76 aa). An N6-lipoyllysine modification is found at Lys43. The disordered stretch occupies residues 80 to 122; the sequence is DAEDMQFKGHDDDSSSKEEPAKEEAPAEQAPVATQTEEVDENR. Positions 84-104 are enriched in basic and acidic residues; that stretch reads MQFKGHDDDSSSKEEPAKEEA. In terms of domain architecture, Peripheral subunit-binding (PSBD) spans 125-162; sequence KAMPSVRKYAREKGVNIKAVSGSGKNGRITKEDVDAYL. The segment at 164-200 is disordered; the sequence is GGAPTASNESADSATNEEVAETPAAPAAVSLEGDFPE. The segment covering 177–192 has biased composition (low complexity); that stretch reads ATNEEVAETPAAPAAV. The active site involves His401.

This sequence belongs to the 2-oxoacid dehydrogenase family. As to quaternary structure, forms a 24-polypeptide structural core with octahedral symmetry. (R)-lipoate is required as a cofactor.

It catalyses the reaction N(6)-[(R)-dihydrolipoyl]-L-lysyl-[protein] + acetyl-CoA = N(6)-[(R)-S(8)-acetyldihydrolipoyl]-L-lysyl-[protein] + CoA. In terms of biological role, the pyruvate dehydrogenase complex catalyzes the overall conversion of pyruvate to acetyl-CoA and CO(2). It contains multiple copies of three enzymatic components: pyruvate dehydrogenase (E1), dihydrolipoamide acetyltransferase (E2) and lipoamide dehydrogenase (E3). This is Dihydrolipoyllysine-residue acetyltransferase component of pyruvate dehydrogenase complex (pdhC) from Staphylococcus aureus.